Here is a 146-residue protein sequence, read N- to C-terminus: Catabolic 3-dehydroquinase (146 aa).

Tyr24 acts as the Proton acceptor in catalysis. Positions 78, 84, and 91 each coordinate substrate. The Proton donor role is filled by His104. Substrate-binding positions include 105–106 and Arg115; that span reads IT.

Belongs to the type-II 3-dehydroquinase family. Homododecamer. Adopts a ring-like structure, composed of an arrangement of two hexameric rings stacked on top of one another.

The enzyme catalyses 3-dehydroquinate = 3-dehydroshikimate + H2O. It functions in the pathway aromatic compound metabolism; 3,4-dihydroxybenzoate biosynthesis; 3,4-dihydroxybenzoate from 3-dehydroquinate: step 1/2. In terms of biological role, is involved in the catabolism of quinate. Allows the utilization of quinate as carbon source via the beta-ketoadipate pathway. The chain is Catabolic 3-dehydroquinase from Candida albicans (strain SC5314 / ATCC MYA-2876) (Yeast).